Reading from the N-terminus, the 463-residue chain is Methionine aminopeptidase 2-1 (463 aa).

A disordered region spans residues 1–98 (MGSKTPEEQI…PPRVPLSDLF (98 aa)). Basic and acidic residues predominate over residues 30–45 (RGTHLSRDGDGSLGDH). A compositionally biased stretch (acidic residues) spans 46–55 (GDDDDADEDD). The segment covering 69–81 (KKKKRPKKKKKPA) has biased composition (basic residues). Position 214 (histidine 214) interacts with substrate. Positions 235, 246, and 315 each coordinate a divalent metal cation. Residue histidine 323 coordinates substrate. A divalent metal cation is bound by residues glutamate 348 and glutamate 444.

It belongs to the peptidase M24A family. Methionine aminopeptidase eukaryotic type 2 subfamily. Co(2+) is required as a cofactor. It depends on Zn(2+) as a cofactor. The cofactor is Mn(2+). Fe(2+) serves as cofactor.

It localises to the cytoplasm. The catalysed reaction is Release of N-terminal amino acids, preferentially methionine, from peptides and arylamides.. Functionally, cotranslationally removes the N-terminal methionine from nascent proteins. The N-terminal methionine is often cleaved when the second residue in the primary sequence is small and uncharged (Met-Ala-, Cys, Gly, Pro, Ser, Thr, or Val). This chain is Methionine aminopeptidase 2-1, found in Colletotrichum graminicola (strain M1.001 / M2 / FGSC 10212) (Maize anthracnose fungus).